A 335-amino-acid polypeptide reads, in one-letter code: Zinc finger protein CO3 (335 aa).

Zn(2+) contacts are provided by Cys15, Cys18, Cys38, and His43. The B box-type; atypical zinc-finger motif lies at 15–57 (CDSCRSAPCAFYCLADSAALCATCDADVHSVNPLARRHRRVPM). Residues 141-179 (AGEKEDASSSKDCSSSHGKSSEGSHEFAVPGEPVPERQG) form a disordered region. Residues 268–310 (REARVHRYREKRKTRRFEKTIRYASRKAYAETRPRIKGRFAKR) enclose the CCT domain.

This sequence belongs to the CONSTANS family.

It localises to the nucleus. Functionally, probable transcription factor involved in the regulation of flowering time under short day (SD) conditions. Functions as a repressor of flowering under SD conditions, independently of HD1, EHD1, MADS50 and MADS51. Controls flowering time under SD conditions by negatively regulating the expression of HD3A and FTL. In Oryza sativa subsp. japonica (Rice), this protein is Zinc finger protein CO3.